The sequence spans 398 residues: Nucleotide-sugar uncharacterized transporter 2 (398 aa).

The next 10 membrane-spanning stretches (helical) occupy residues 54–74 (FCGP…IILA), 84–104 (FNFP…LLAF), 119–139 (TTPF…SGLA), 150–170 (FYQM…FVLF), 179–199 (VMAL…DLEF), 201–221 (LFGA…KILW), 242–262 (FTVF…VLLF), 271–291 (AILI…LALG), 299–319 (VVLG…IFGS), and 322–342 (GFIS…YTWL).

The protein belongs to the TPT transporter family. TPT (TC 2.A.7.9) subfamily.

It is found in the membrane. In Arabidopsis thaliana (Mouse-ear cress), this protein is Nucleotide-sugar uncharacterized transporter 2.